The chain runs to 539 residues: Phosphatidylinositol 4-phosphate 5-kinase type-1 beta (539 aa).

The segment at 1-21 is disordered; that stretch reads MSSTAENGDAVPGKQNEEKTY. The 371-residue stretch at 25 to 395 folds into the PIPK domain; it reads ASSAIKGAIQ…RFLKFMNSRV (371 aa). S445, S447, and S448 each carry phosphoserine.

In terms of assembly, interacts with RAC1, AJUBA, PLD1, PLD2 and ARF1. In terms of tissue distribution, highly expressed in brain and testis. Barely detectable in liver and skeletal muscle.

Its subcellular location is the cytoplasm. The protein localises to the cytosol. It is found in the cell membrane. The protein resides in the endomembrane system. It catalyses the reaction a 1,2-diacyl-sn-glycero-3-phospho-(1D-myo-inositol 4-phosphate) + ATP = a 1,2-diacyl-sn-glycero-3-phospho-(1D-myo-inositol-4,5-bisphosphate) + ADP + H(+). The catalysed reaction is 1-octadecanoyl-2-(5Z,8Z,11Z,14Z)-eicosatetraenoyl-sn-glycero-3-phospho-1D-myo-inositol 4-phosphate + ATP = 1-octadecanoyl-2-(5Z,8Z,11Z,14Z)-eicosatetraenoyl-sn-glycero-3-phospho-1D-myo-inositol 4,5-bisphosphate + ADP + H(+). The enzyme catalyses 1-octadecanoyl-2-(9Z)-octadecenoyl-sn-glycero-3-phospho-1D-myo-inositol 4-phosphate + ATP = 1-octadecanoyl-2-(9Z)-octadecenoyl-sn-glycero-3-phospho-1D-myo-inositol 4,5-bisphosphate + ADP + H(+). It carries out the reaction 1-octadecanoyl-2-(9Z)-octadecenoyl-sn-glycero-3-phospho-1D-myo-inositol + ATP = 1-octadecanoyl-2-(9Z)-octadecenoyl-sn-glycero-3-phospho-1D-myo-inositol 5-phosphate + ADP + H(+). It catalyses the reaction 1-octadecanoyl-2-(9Z,12Z)-octadecadienoyl-sn-glycero-3-phospho-1D-myo-inositol + ATP = 1-octadecanoyl-2-(9Z,12Z)-octadecadienoyl-sn-glycero-3-phospho-1D-myo-inositol 5-phosphate + ADP + H(+). The catalysed reaction is 1-octadecanoyl-2-(5Z,8Z,11Z,14Z-eicosatetraenoyl)-sn-glycero-3-phospho-(1D-myo-inositol) + ATP = 1-octadecanoyl-2-(5Z,8Z,11Z,14Z)-eicosatetraenoyl-sn-glycero-3-phospho-1D-myo-inositol 5-phosphate + ADP + H(+). The enzyme catalyses 1,2-di-(9Z,12Z)-octadecadienoyl-sn-glycero-3-phospho-1D-myo-inositol + ATP = 1,2-di(9Z,12Z)-octadecadienoyl-sn-glycero-3-phospho-1D-myo-inositol 5-phosphate + ADP + H(+). With respect to regulation, activated by phosphatidic acid. Functionally, catalyzes the phosphorylation of phosphatidylinositol 4-phosphate (PtdIns(4)P/PI4P) to form phosphatidylinositol 4,5-bisphosphate (PtdIns(4,5)P2/PIP2), a lipid second messenger that regulates several cellular processes such as signal transduction, vesicle trafficking, actin cytoskeleton dynamics, cell adhesion, and cell motility. PtdIns(4,5)P2 can directly act as a second messenger or can be utilized as a precursor to generate other second messengers: inositol 1,4,5-trisphosphate (IP3), diacylglycerol (DAG) or phosphatidylinositol-3,4,5-trisphosphate (PtdIns(3,4,5)P3/PIP3). Mediates RAC1-dependent reorganization of actin filaments. Contributes to the activation of phospholipase PLD2. Together with PIP5K1A, is required, after stimulation by G-protein coupled receptors, for the synthesis of IP3 that will induce stable platelet adhesion. This Mus musculus (Mouse) protein is Phosphatidylinositol 4-phosphate 5-kinase type-1 beta.